Here is a 340-residue protein sequence, read N- to C-terminus: MTLVGNFSPLVLVGDSDRVEAETVGAYLDGWAGHDKVRLATANAIKAILSGAGRLVGRIARGYLPGDPGKLVGVNSDQDQQKSIDVGSHNLFVELLIAAGVASILSEEADLPVAGKADGLVAVAIDPLDGSGNVGLGAPLGTIFSIFPADVEEPFLQPGNRQIAAGYVSYGNSVDLGFSVGEGVIFATLDPVSGQFHITRRNVKLPERTSDLAFNASVQRHLSAGMQAYVNDAFLGKDGPRGRNFNMRWLGAAVGDMHRIMQRGGLFFYVNDSRPGYEKGRLRLVYEANPIAFLAREAGGKATDGSRPILDIVPQTYHERSALVFGVAEEVDILGEYFVK.

Residues E107, D126, L128, and D129 each coordinate Mg(2+). N215 is a substrate binding site. E287 serves as a coordination point for Mg(2+).

It belongs to the FBPase class 1 family. Homotetramer. Mg(2+) serves as cofactor.

It localises to the cytoplasm. It carries out the reaction beta-D-fructose 1,6-bisphosphate + H2O = beta-D-fructose 6-phosphate + phosphate. The protein operates within carbohydrate biosynthesis; gluconeogenesis. The polypeptide is Fructose-1,6-bisphosphatase class 1 (Brucella suis (strain ATCC 23445 / NCTC 10510)).